The primary structure comprises 757 residues: Ecdysone receptor (757 aa).

The interval 1-300 is modulating; it reads MMKRRWSNNG…GPAPRLQEEL (300 aa). Disordered stretches follow at residues 126–192 and 235–289; these read NSVG…GGGG and LNHH…KKIK. Gly residues predominate over residues 128-138; it reads VGGGGGGGGVP. The segment covering 167-183 has biased composition (low complexity); it reads NSNSNHSNSSSHHTNGH. 2 NR C4-type zinc fingers span residues 301–321 and 337–361; these read CLVC…CEGC and CKFG…LKKC. The segment at residues 301–373 is a DNA-binding region (nuclear receptor); that stretch reads CLVCGDRASG…VGMRPECVVP (73 aa). The region spanning 442 to 677 is the NR LBD domain; sequence NQLAVIYKLI…FLEEIWDVHA (236 aa). Residues 717–734 are compositionally biased toward low complexity; that stretch reads TSMATSSSSSLSPSAAST. The segment at 717 to 739 is disordered; it reads TSMATSSSSSLSPSAASTPNGGA.

Belongs to the nuclear hormone receptor family. NR1 subfamily.

The protein localises to the nucleus. Receptor for ecdysone. Binds to ecdysone response elements (ECRES). The chain is Ecdysone receptor (EcR) from Lucilia cuprina (Green bottle fly).